The chain runs to 237 residues: tRNA1(Val) (adenine(37)-N6)-methyltransferase (237 aa).

This sequence belongs to the methyltransferase superfamily. tRNA (adenine-N(6)-)-methyltransferase family.

It localises to the cytoplasm. The enzyme catalyses adenosine(37) in tRNA1(Val) + S-adenosyl-L-methionine = N(6)-methyladenosine(37) in tRNA1(Val) + S-adenosyl-L-homocysteine + H(+). Specifically methylates the adenine in position 37 of tRNA(1)(Val) (anticodon cmo5UAC). This chain is tRNA1(Val) (adenine(37)-N6)-methyltransferase, found in Bacteroides fragilis (strain ATCC 25285 / DSM 2151 / CCUG 4856 / JCM 11019 / LMG 10263 / NCTC 9343 / Onslow / VPI 2553 / EN-2).